Reading from the N-terminus, the 378-residue chain is Acyl-coenzyme A diphosphatase NUDT19 (378 aa).

The 252-residue stretch at 7–258 folds into the Nudix hydrolase domain; sequence HWREAASVLL…EIWLAPPQFY (252 aa). The short motif at 105–126 is the Nudix box element; that stretch reads SPLPGEVAFRICAIRETFEEAG. Residues E120 and E124 each contribute to the Mg(2+) site. Residues 376–378 carry the Microbody targeting signal motif; it reads SRL.

The protein belongs to the Nudix hydrolase family. In terms of assembly, monomer. The cofactor is Mg(2+). Mn(2+) is required as a cofactor.

Its subcellular location is the peroxisome. It catalyses the reaction an acyl-CoA + H2O = an acyl-4'-phosphopantetheine + adenosine 3',5'-bisphosphate + 2 H(+). It carries out the reaction CoA + H2O = (R)-4'-phosphopantetheine + adenosine 3',5'-bisphosphate + 2 H(+). The enzyme catalyses hexanoyl-CoA + H2O = hexanoyl-4'-phosphopantetheine + adenosine 3',5'-bisphosphate + 2 H(+). The catalysed reaction is octanoyl-CoA + H2O = S-octanoyl-4'-phosphopantetheine + adenosine 3',5'-bisphosphate + 2 H(+). It catalyses the reaction butanoyl-CoA + H2O = S-butanoyl-4'-phosphopantetheine + adenosine 3',5'-bisphosphate + 2 H(+). It carries out the reaction propanoyl-CoA + H2O = propanoyl-4'-phosphopantetheine + adenosine 3',5'-bisphosphate + 2 H(+). The enzyme catalyses malonyl-CoA + H2O = malonyl-4'-phosphopantetheine + adenosine 3',5'-bisphosphate + 2 H(+). The catalysed reaction is succinyl-CoA + H2O = succinyl-4'-phosphopantetheine + adenosine 3',5'-bisphosphate + 2 H(+). It catalyses the reaction choloyl-CoA + H2O = S-choloyl-4'-phosphopantetheine + adenosine 3',5'-bisphosphate + 2 H(+). It carries out the reaction 4,8-dimethylnonanoyl-CoA + H2O = S-(4,8-dimethylnonanoyl)-4'-phosphopantetheine + adenosine 3',5'-bisphosphate + 2 H(+). The enzyme catalyses (9Z,12Z,15Z)-octadecatrienoyl-CoA + H2O = S-(9Z,12Z,15Z-octadecatrienoyl)-4'-phosphopantetheine + adenosine 3',5'-bisphosphate + 2 H(+). The catalysed reaction is (9Z,12Z)-octadecadienoyl-CoA + H2O = S-(9Z,12Z-octadecadienoyl)-4'-phosphopantetheine + adenosine 3',5'-bisphosphate + 2 H(+). It catalyses the reaction (9Z)-hexadecenoyl-CoA + H2O = S-(9Z-hexadecenoyl)-4'-phosphopantetheine + adenosine 3',5'-bisphosphate + 2 H(+). It carries out the reaction (9Z)-tetradecenoyl-CoA + H2O = S-(9Z-tetradecenoyl)-4'-phosphopantetheine + adenosine 3',5'-bisphosphate + 2 H(+). The enzyme catalyses (6Z)-octenoyl-CoA + H2O = S-(6Z-octenoyl)-4'-phosphopantetheine + adenosine 3',5'-bisphosphate + 2 H(+). The catalysed reaction is hexadecanoyl-CoA + H2O = S-hexadecanoyl-4'-phosphopantetheine + adenosine 3',5'-bisphosphate + 2 H(+). It catalyses the reaction tetradecanoyl-CoA + H2O = tetradecanoyl-4'-phosphopantetheine + adenosine 3',5'-bisphosphate + 2 H(+). It carries out the reaction dodecanoyl-CoA + H2O = S-dodecanoyl-4'-phosphopantetheine + adenosine 3',5'-bisphosphate + 2 H(+). The enzyme catalyses a 5'-end CoA-ribonucleoside in mRNA + H2O = a 5'-end phospho-adenosine-phospho-ribonucleoside in mRNA + (R)-4'-phosphopantetheine + 2 H(+). Fatty acyl-coenzyme A (CoA) diphosphatase that hydrolyzes fatty acyl-CoA to yield acyl-4'-phosphopantetheine and adenosine 3',5'-bisphosphate. Mediates the hydrolysis of a wide range of CoA esters, including choloyl-CoA and branched-chain fatty-acyl-CoA esters and at low substrate concentrations medium and long-chain fatty-acyl-CoA esters are the primary substrates. Highest activity seen with medium-chain acyl-CoA esters and higher rates of activity seen with the unsaturated acyl-CoA esters compared with the saturated esters. Exhibits decapping activity towards dpCoA-capped RNAs in vitro. This chain is Acyl-coenzyme A diphosphatase NUDT19 (NUDT19), found in Gallus gallus (Chicken).